Reading from the N-terminus, the 438-residue chain is Probable tRNA pseudouridine synthase D (438 aa).

The Nucleophile role is filled by D86. The 226-residue stretch at 165–390 (GVPNFFGIQR…SKGTRRELLL (226 aa)) folds into the TRUD domain.

The protein belongs to the pseudouridine synthase TruD family.

The enzyme catalyses uridine(13) in tRNA = pseudouridine(13) in tRNA. Could be responsible for synthesis of pseudouridine from uracil-13 in transfer RNAs. This is Probable tRNA pseudouridine synthase D from Methanosarcina barkeri (strain Fusaro / DSM 804).